We begin with the raw amino-acid sequence, 177 residues long: Bifunctional protein PyrR (177 aa).

The short motif at 99–111 (VVLVDDVLFTGRT) is the PRPP-binding element.

The protein belongs to the purine/pyrimidine phosphoribosyltransferase family. PyrR subfamily.

The catalysed reaction is UMP + diphosphate = 5-phospho-alpha-D-ribose 1-diphosphate + uracil. Functionally, regulates the transcription of the pyrimidine nucleotide (pyr) operon in response to exogenous pyrimidines. In terms of biological role, also displays a weak uracil phosphoribosyltransferase activity which is not physiologically significant. The protein is Bifunctional protein PyrR of Geobacter sp. (strain M21).